Consider the following 369-residue polypeptide: Protein RecA (369 aa).

Positions 1 to 10 are enriched in basic and acidic residues; it reads MARTTDDSKK. A disordered region spans residues 1–20; it reads MARTTDDSKKAAPAAGTADE. Residue 82–89 coordinates ATP; it reads GPESSGKT. The tract at residues 350–369 is disordered; sequence PAAAVAAPDEGDDDLGDEEV. Residues 358–369 are compositionally biased toward acidic residues; that stretch reads DEGDDDLGDEEV.

This sequence belongs to the RecA family.

The protein resides in the cytoplasm. In terms of biological role, can catalyze the hydrolysis of ATP in the presence of single-stranded DNA, the ATP-dependent uptake of single-stranded DNA by duplex DNA, and the ATP-dependent hybridization of homologous single-stranded DNAs. It interacts with LexA causing its activation and leading to its autocatalytic cleavage. The polypeptide is Protein RecA (Gloeobacter violaceus (strain ATCC 29082 / PCC 7421)).